A 264-amino-acid polypeptide reads, in one-letter code: Proliferating cell nuclear antigen (264 aa).

A DNA-binding region spans residues 61 to 80 (RCDRNISMGMNLANMAKMLK).

It belongs to the PCNA family.

The protein resides in the nucleus. This protein is an auxiliary protein of DNA polymerase delta and is involved in the control of eukaryotic DNA replication by increasing the polymerase's processibility during elongation of the leading strand. This chain is Proliferating cell nuclear antigen (PCNA), found in Nicotiana tabacum (Common tobacco).